The sequence spans 377 residues: Probable protein phosphatase 2C 61 (377 aa).

One can recognise a PPM-type phosphatase domain in the interval 30–338 (AAGEFSMAAA…DDITAVVVFL (309 aa)). Mn(2+) contacts are provided by Asp64, Gly65, Asp269, and Asp329.

The protein belongs to the PP2C family. Mg(2+) is required as a cofactor. The cofactor is Mn(2+).

It carries out the reaction O-phospho-L-seryl-[protein] + H2O = L-seryl-[protein] + phosphate. The catalysed reaction is O-phospho-L-threonyl-[protein] + H2O = L-threonyl-[protein] + phosphate. This is Probable protein phosphatase 2C 61 from Oryza sativa subsp. japonica (Rice).